A 455-amino-acid polypeptide reads, in one-letter code: Serine--tRNA ligase (455 aa).

252-254 is an L-serine binding site; it reads TAE. Residues 283 to 285 and Val299 each bind ATP; that span reads RKE. Glu306 is a binding site for L-serine. 370–373 contributes to the ATP binding site; it reads EVVS. Thr406 is a binding site for L-serine.

This sequence belongs to the class-II aminoacyl-tRNA synthetase family. Type-1 seryl-tRNA synthetase subfamily. Homodimer. The tRNA molecule binds across the dimer.

It localises to the cytoplasm. The catalysed reaction is tRNA(Ser) + L-serine + ATP = L-seryl-tRNA(Ser) + AMP + diphosphate + H(+). The enzyme catalyses tRNA(Sec) + L-serine + ATP = L-seryl-tRNA(Sec) + AMP + diphosphate + H(+). The protein operates within aminoacyl-tRNA biosynthesis; selenocysteinyl-tRNA(Sec) biosynthesis; L-seryl-tRNA(Sec) from L-serine and tRNA(Sec): step 1/1. Its function is as follows. Catalyzes the attachment of serine to tRNA(Ser). Is also able to aminoacylate tRNA(Sec) with serine, to form the misacylated tRNA L-seryl-tRNA(Sec), which will be further converted into selenocysteinyl-tRNA(Sec). The polypeptide is Serine--tRNA ligase (Thermococcus gammatolerans (strain DSM 15229 / JCM 11827 / EJ3)).